The chain runs to 30 residues: Phospholipase A2 acanmyotoxin-2 (30 aa).

Y28 and G30 together coordinate Ca(2+).

The cofactor is Ca(2+). Contains seven disulfide bonds. Expressed by the venom gland.

The protein localises to the secreted. It catalyses the reaction a 1,2-diacyl-sn-glycero-3-phosphocholine + H2O = a 1-acyl-sn-glycero-3-phosphocholine + a fatty acid + H(+). Functionally, snake venom phospholipase A2 (PLA2) that has myotoxic activity but no significant neurotoxicity. PLA2 catalyzes the calcium-dependent hydrolysis of the 2-acyl groups in 3-sn-phosphoglycerides. This is Phospholipase A2 acanmyotoxin-2 from Acanthophis sp. (strain Seram) (Seram death adder).